Consider the following 632-residue polypeptide: DNA mismatch repair protein MutL (632 aa).

A disordered region spans residues E376–Q397.

It belongs to the DNA mismatch repair MutL/HexB family.

In terms of biological role, this protein is involved in the repair of mismatches in DNA. It is required for dam-dependent methyl-directed DNA mismatch repair. May act as a 'molecular matchmaker', a protein that promotes the formation of a stable complex between two or more DNA-binding proteins in an ATP-dependent manner without itself being part of a final effector complex. The protein is DNA mismatch repair protein MutL of Pseudomonas entomophila (strain L48).